The following is a 195-amino-acid chain: Ribonuclease HII (195 aa).

The RNase H type-2 domain occupies 6-195 (SLIAGVDEVG…KSFISRLEIN (190 aa)). A divalent metal cation-binding residues include D12, E13, and D108.

This sequence belongs to the RNase HII family. Mn(2+) serves as cofactor. Mg(2+) is required as a cofactor.

Its subcellular location is the cytoplasm. The catalysed reaction is Endonucleolytic cleavage to 5'-phosphomonoester.. In terms of biological role, endonuclease that specifically degrades the RNA of RNA-DNA hybrids. This Prochlorococcus marinus (strain NATL1A) protein is Ribonuclease HII.